A 131-amino-acid chain; its full sequence is Histone H3-like 4 (131 aa).

N6,N6,N6-trimethyllysine; alternate is present on K10. K10 is subject to N6,N6-dimethyllysine; alternate. An N6-acetyllysine; alternate modification is found at K10. An N6-methyllysine; alternate modification is found at K10. A Phosphothreonine modification is found at T12. The residue at position 15 (K15) is an N6-acetyllysine. A Phosphoserine modification is found at S27. At K32 the chain carries N6,N6,N6-trimethyllysine; alternate. Position 32 is an N6,N6-dimethyllysine; alternate (K32). K32 carries the N6-methyllysine; alternate modification.

Belongs to the histone H3 family. As to quaternary structure, the nucleosome is a histone octamer containing two molecules each of H2A, H2B, H3 and H4 assembled in one H3-H4 heterotetramer and two H2A-H2B heterodimers. The octamer wraps approximately 147 bp of DNA. In terms of tissue distribution, expressed in roots, seedlings, leaves buds and open flowers.

The protein resides in the nucleus. It is found in the chromosome. In terms of biological role, core component of nucleosome. Nucleosomes wrap and compact DNA into chromatin, limiting DNA accessibility to the cellular machineries which require DNA as a template. Histones thereby play a central role in transcription regulation, DNA repair, DNA replication and chromosomal stability. DNA accessibility is regulated via a complex set of post-translational modifications of histones, also called histone code, and nucleosome remodeling. This chain is Histone H3-like 4, found in Arabidopsis thaliana (Mouse-ear cress).